The chain runs to 197 residues: uncharacterized protein (197 aa).

The helical transmembrane segment at I11–V31 threads the bilayer.

The protein resides in the membrane. This is an uncharacterized protein from Mycoplasma pneumoniae (strain ATCC 29342 / M129 / Subtype 1) (Mycoplasmoides pneumoniae).